The following is a 329-amino-acid chain: DNA-directed RNA polymerase subunit alpha (329 aa).

The tract at residues 1–234 is alpha N-terminal domain (alpha-NTD); that stretch reads MQGSVTEFLK…EQLDAFVELR (234 aa). Positions 248–329 are alpha C-terminal domain (alpha-CTD); sequence FDPILLRPVD…WPPASLIDND (82 aa).

It belongs to the RNA polymerase alpha chain family. Homodimer. The RNAP catalytic core consists of 2 alpha, 1 beta, 1 beta' and 1 omega subunit. When a sigma factor is associated with the core the holoenzyme is formed, which can initiate transcription.

It catalyses the reaction RNA(n) + a ribonucleoside 5'-triphosphate = RNA(n+1) + diphosphate. Its function is as follows. DNA-dependent RNA polymerase catalyzes the transcription of DNA into RNA using the four ribonucleoside triphosphates as substrates. The chain is DNA-directed RNA polymerase subunit alpha from Idiomarina loihiensis (strain ATCC BAA-735 / DSM 15497 / L2-TR).